The sequence spans 115 residues: Large ribosomal subunit protein bL20c (115 aa).

Belongs to the bacterial ribosomal protein bL20 family.

Its subcellular location is the plastid. The protein localises to the chloroplast. In terms of biological role, binds directly to 23S ribosomal RNA and is necessary for the in vitro assembly process of the 50S ribosomal subunit. It is not involved in the protein synthesizing functions of that subunit. The polypeptide is Large ribosomal subunit protein bL20c (rpl20) (Cyanidium caldarium (Red alga)).